A 498-amino-acid chain; its full sequence is ATP synthase subunit beta, chloroplastic (498 aa).

Position 172–179 (172–179 (GGAGVGKT)) interacts with ATP.

The protein belongs to the ATPase alpha/beta chains family. As to quaternary structure, F-type ATPases have 2 components, CF(1) - the catalytic core - and CF(0) - the membrane proton channel. CF(1) has five subunits: alpha(3), beta(3), gamma(1), delta(1), epsilon(1). CF(0) has four main subunits: a(1), b(1), b'(1) and c(9-12).

Its subcellular location is the plastid. The protein resides in the chloroplast thylakoid membrane. It catalyses the reaction ATP + H2O + 4 H(+)(in) = ADP + phosphate + 5 H(+)(out). Its function is as follows. Produces ATP from ADP in the presence of a proton gradient across the membrane. The catalytic sites are hosted primarily by the beta subunits. In Magnolia tripetala (Umbrella-tree), this protein is ATP synthase subunit beta, chloroplastic.